Consider the following 349-residue polypeptide: Protein Wnt-7b (349 aa).

The N-terminal stretch at 1–24 (MHRNFRKWIFYVFLCFGVLYVKLG) is a signal peptide. Intrachain disulfides connect C73–C84, C123–C131, C133–C152, C200–C214, and C202–C209. N-linked (GlcNAc...) asparagine glycosylation is found at N83 and N127. The O-palmitoleoyl serine; by PORCN moiety is linked to residue S206. The tract at residues 238-266 (VEVVRASRLRQPTFLRIKQLRSYQKPMET) is disordered linker. 6 disulfides stabilise this stretch: C278–C309, C294–C304, C308–C348, C324–C339, C326–C336, and C331–C332. N-linked (GlcNAc...) asparagine glycosylation is present at N295.

The protein belongs to the Wnt family. As to quaternary structure, forms a soluble 1:1 complex with AFM; this prevents oligomerization and is required for prolonged biological activity. The complex with AFM may represent the physiological form in body fluids. Interacts with FZD1 and FZD10. Interacts with FZD4 (in vitro). Interacts with PORCN. Interacts with glypican GPC3. Interacts (via intrinsically disordered linker region) with RECK; interaction with RECK confers ligand selectivity for Wnt7 in brain endothelial cells and allows these cells to selectively respond to Wnt7. Palmitoleoylation is required for efficient binding to frizzled receptors. Depalmitoleoylation leads to Wnt signaling pathway inhibition. As to expression, moderately expressed in fetal brain, weakly expressed in fetal lung and kidney, and faintly expressed in adult brain, lung and prostate.

It localises to the secreted. It is found in the extracellular space. Its subcellular location is the extracellular matrix. Ligand for members of the frizzled family of seven transmembrane receptors that functions in the canonical Wnt/beta-catenin signaling pathway. Required for normal fusion of the chorion and the allantois during placenta development. Required for central nervous system (CNS) angiogenesis and blood-brain barrier regulation. The chain is Protein Wnt-7b (WNT7B) from Homo sapiens (Human).